A 289-amino-acid chain; its full sequence is Probable prolyl 4-hydroxylase 10 (289 aa).

The chain crosses the membrane as a helical; Signal-anchor for type II membrane protein span at residues 20-40 (LVFAVLIMSTFVILILLAFGI). Topologically, residues 41 to 289 (LSVPSNNAGS…KWLRVHEYKV (249 aa)) are lumenal. The Fe2OG dioxygenase domain maps to 161–284 (HGEGLQVLHY…KWSSTKWLRV (124 aa)). Fe cation contacts are provided by His179 and Asp181. An N-linked (GlcNAc...) asparagine glycan is attached at Asn220. Fe cation is bound at residue His265. Lys275 lines the 2-oxoglutarate pocket.

This sequence belongs to the P4HA family. Fe(2+) serves as cofactor. L-ascorbate is required as a cofactor.

It localises to the endoplasmic reticulum membrane. The catalysed reaction is L-prolyl-[collagen] + 2-oxoglutarate + O2 = trans-4-hydroxy-L-prolyl-[collagen] + succinate + CO2. Its function is as follows. Catalyzes the post-translational formation of 4-hydroxyproline in -Xaa-Pro-Gly- sequences in proline-rich peptide sequences of plant glycoproteins and other proteins. Hydroxyprolines are important constituent of many plant cell wall glycoproteins such as extensins, hydroxyproline-rich glycoproteins, lectins and arabinogalactan proteins. This chain is Probable prolyl 4-hydroxylase 10, found in Arabidopsis thaliana (Mouse-ear cress).